Consider the following 1408-residue polypeptide: DNA-directed RNA polymerase subunit beta' (1408 aa).

4 residues coordinate Zn(2+): Cys70, Cys72, Cys85, and Cys88. Asp460, Asp462, and Asp464 together coordinate Mg(2+). Zn(2+) contacts are provided by Cys814, Cys888, Cys895, and Cys898.

This sequence belongs to the RNA polymerase beta' chain family. As to quaternary structure, the RNAP catalytic core consists of 2 alpha, 1 beta, 1 beta' and 1 omega subunit. When a sigma factor is associated with the core the holoenzyme is formed, which can initiate transcription. The cofactor is Mg(2+). It depends on Zn(2+) as a cofactor.

It catalyses the reaction RNA(n) + a ribonucleoside 5'-triphosphate = RNA(n+1) + diphosphate. In terms of biological role, DNA-dependent RNA polymerase catalyzes the transcription of DNA into RNA using the four ribonucleoside triphosphates as substrates. This chain is DNA-directed RNA polymerase subunit beta', found in Baumannia cicadellinicola subsp. Homalodisca coagulata.